The chain runs to 135 residues: Large ribosomal subunit protein uL18 (135 aa).

Residues M1–S25 form a disordered region.

The protein belongs to the universal ribosomal protein uL18 family. In terms of assembly, part of the 50S ribosomal subunit; part of the 5S rRNA/L5/L18/L25 subcomplex. Contacts the 5S and 23S rRNAs.

Functionally, this is one of the proteins that bind and probably mediate the attachment of the 5S RNA into the large ribosomal subunit, where it forms part of the central protuberance. In Nocardia farcinica (strain IFM 10152), this protein is Large ribosomal subunit protein uL18.